Here is a 417-residue protein sequence, read N- to C-terminus: Serine hydroxymethyltransferase (417 aa).

Residues leucine 121 and 125–127 (GHL) each bind (6S)-5,6,7,8-tetrahydrofolate. Lysine 229 carries the post-translational modification N6-(pyridoxal phosphate)lysine. A (6S)-5,6,7,8-tetrahydrofolate-binding site is contributed by 355–357 (SPF).

This sequence belongs to the SHMT family. As to quaternary structure, homodimer. It depends on pyridoxal 5'-phosphate as a cofactor.

It is found in the cytoplasm. The catalysed reaction is (6R)-5,10-methylene-5,6,7,8-tetrahydrofolate + glycine + H2O = (6S)-5,6,7,8-tetrahydrofolate + L-serine. The protein operates within one-carbon metabolism; tetrahydrofolate interconversion. It participates in amino-acid biosynthesis; glycine biosynthesis; glycine from L-serine: step 1/1. Functionally, catalyzes the reversible interconversion of serine and glycine with tetrahydrofolate (THF) serving as the one-carbon carrier. This reaction serves as the major source of one-carbon groups required for the biosynthesis of purines, thymidylate, methionine, and other important biomolecules. Also exhibits THF-independent aldolase activity toward beta-hydroxyamino acids, producing glycine and aldehydes, via a retro-aldol mechanism. In Buchnera aphidicola subsp. Schizaphis graminum (strain Sg), this protein is Serine hydroxymethyltransferase.